We begin with the raw amino-acid sequence, 173 residues long: Phosphopantetheine adenylyltransferase (173 aa).

Serine 9 contributes to the substrate binding site. ATP contacts are provided by residues 9-10 and histidine 17; that span reads SF. Substrate contacts are provided by lysine 41, threonine 73, and arginine 87. ATP is bound by residues 88-90, glutamate 98, and 123-129; these read GVR and YQYLSSS.

This sequence belongs to the bacterial CoaD family. In terms of assembly, homohexamer. The cofactor is Mg(2+).

The protein localises to the cytoplasm. The enzyme catalyses (R)-4'-phosphopantetheine + ATP + H(+) = 3'-dephospho-CoA + diphosphate. It participates in cofactor biosynthesis; coenzyme A biosynthesis; CoA from (R)-pantothenate: step 4/5. Functionally, reversibly transfers an adenylyl group from ATP to 4'-phosphopantetheine, yielding dephospho-CoA (dPCoA) and pyrophosphate. This is Phosphopantetheine adenylyltransferase from Limosilactobacillus fermentum (strain NBRC 3956 / LMG 18251) (Lactobacillus fermentum).